The following is a 271-amino-acid chain: Tryptophan synthase alpha chain (271 aa).

Residues glutamate 56 and aspartate 67 each act as proton acceptor in the active site.

The protein belongs to the TrpA family. Tetramer of two alpha and two beta chains.

It catalyses the reaction (1S,2R)-1-C-(indol-3-yl)glycerol 3-phosphate + L-serine = D-glyceraldehyde 3-phosphate + L-tryptophan + H2O. It functions in the pathway amino-acid biosynthesis; L-tryptophan biosynthesis; L-tryptophan from chorismate: step 5/5. In terms of biological role, the alpha subunit is responsible for the aldol cleavage of indoleglycerol phosphate to indole and glyceraldehyde 3-phosphate. This is Tryptophan synthase alpha chain from Mycobacterium intracellulare.